A 58-amino-acid chain; its full sequence is Photosystem II reaction center protein K (58 aa).

The propeptide occupies 1–21 (MLVISNVYPSNLFTLINPFFA). A helical transmembrane segment spans residues 29 to 49 (IFDPIVDVMPIIPVFFFLLAF).

This sequence belongs to the PsbK family. In terms of assembly, PSII is composed of 1 copy each of membrane proteins PsbA, PsbB, PsbC, PsbD, PsbE, PsbF, PsbH, PsbI, PsbJ, PsbK, PsbL, PsbM, PsbT, PsbX, PsbY, PsbZ, Psb30/Ycf12, at least 3 peripheral proteins of the oxygen-evolving complex and a large number of cofactors. It forms dimeric complexes.

It is found in the plastid. It localises to the chloroplast thylakoid membrane. In terms of biological role, one of the components of the core complex of photosystem II (PSII). PSII is a light-driven water:plastoquinone oxidoreductase that uses light energy to abstract electrons from H(2)O, generating O(2) and a proton gradient subsequently used for ATP formation. It consists of a core antenna complex that captures photons, and an electron transfer chain that converts photonic excitation into a charge separation. This is Photosystem II reaction center protein K from Psilotum nudum (Whisk fern).